Consider the following 239-residue polypeptide: SkfA peptide export ATP-binding protein SkfE (239 aa).

An ABC transporter domain is found at Met4 to Leu232. Gly36–Thr43 provides a ligand contact to ATP.

This sequence belongs to the ABC transporter superfamily. SkfA peptide export (TC 3.A.1.128.1) family.

Its subcellular location is the cell membrane. It catalyses the reaction sulfate(out) + ATP + H2O = sulfate(in) + ADP + phosphate + H(+). It carries out the reaction thiosulfate(out) + ATP + H2O = thiosulfate(in) + ADP + phosphate + H(+). In terms of biological role, probably part of the ABC transporter SkfEF involved in the export of the bacteriocin SKF. Probably responsible for energy coupling to the transport system. This Bacillus subtilis (strain 168) protein is SkfA peptide export ATP-binding protein SkfE.